Here is a 188-residue protein sequence, read N- to C-terminus: Peptidyl-tRNA hydrolase (188 aa).

Phe-15 is a binding site for tRNA. The Proton acceptor role is filled by His-20. Residues Tyr-64, Asn-66, and Asn-112 each coordinate tRNA.

The protein belongs to the PTH family. Monomer.

It is found in the cytoplasm. The enzyme catalyses an N-acyl-L-alpha-aminoacyl-tRNA + H2O = an N-acyl-L-amino acid + a tRNA + H(+). Its function is as follows. Hydrolyzes ribosome-free peptidyl-tRNAs (with 1 or more amino acids incorporated), which drop off the ribosome during protein synthesis, or as a result of ribosome stalling. Functionally, catalyzes the release of premature peptidyl moieties from peptidyl-tRNA molecules trapped in stalled 50S ribosomal subunits, and thus maintains levels of free tRNAs and 50S ribosomes. In Borrelia duttonii (strain Ly), this protein is Peptidyl-tRNA hydrolase.